Reading from the N-terminus, the 465-residue chain is Probable M18 family aminopeptidase 1 (465 aa).

Zn(2+)-binding residues include His-105, His-180, and His-441.

It belongs to the peptidase M18 family. It depends on Zn(2+) as a cofactor.

The chain is Probable M18 family aminopeptidase 1 (apeA) from Clostridium acetobutylicum (strain ATCC 824 / DSM 792 / JCM 1419 / IAM 19013 / LMG 5710 / NBRC 13948 / NRRL B-527 / VKM B-1787 / 2291 / W).